A 189-amino-acid polypeptide reads, in one-letter code: Probable nicotinate-nucleotide adenylyltransferase (189 aa).

Belongs to the NadD family.

It carries out the reaction nicotinate beta-D-ribonucleotide + ATP + H(+) = deamido-NAD(+) + diphosphate. It functions in the pathway cofactor biosynthesis; NAD(+) biosynthesis; deamido-NAD(+) from nicotinate D-ribonucleotide: step 1/1. Catalyzes the reversible adenylation of nicotinate mononucleotide (NaMN) to nicotinic acid adenine dinucleotide (NaAD). The sequence is that of Probable nicotinate-nucleotide adenylyltransferase from Bacillus anthracis (strain CDC 684 / NRRL 3495).